The following is a 704-amino-acid chain: Phosphoribosylformylglycinamidine synthase subunit PurL (704 aa).

Residue histidine 32 is part of the active site. Residue tyrosine 35 participates in ATP binding. Residue glutamate 76 participates in Mg(2+) binding. Residues 77–80 (SHNH) and arginine 99 contribute to the substrate site. The active-site Proton acceptor is the histidine 78. Aspartate 100 is a binding site for Mg(2+). Position 224 (glutamine 224) interacts with substrate. Residue aspartate 252 participates in Mg(2+) binding. 296-298 (ESQ) is a substrate binding site. ATP is bound by residues aspartate 471 and glycine 508. A Mg(2+)-binding site is contributed by asparagine 509. Position 511 (serine 511) interacts with substrate.

The protein belongs to the FGAMS family. Monomer. Part of the FGAM synthase complex composed of 1 PurL, 1 PurQ and 2 PurS subunits.

Its subcellular location is the cytoplasm. It carries out the reaction N(2)-formyl-N(1)-(5-phospho-beta-D-ribosyl)glycinamide + L-glutamine + ATP + H2O = 2-formamido-N(1)-(5-O-phospho-beta-D-ribosyl)acetamidine + L-glutamate + ADP + phosphate + H(+). The protein operates within purine metabolism; IMP biosynthesis via de novo pathway; 5-amino-1-(5-phospho-D-ribosyl)imidazole from N(2)-formyl-N(1)-(5-phospho-D-ribosyl)glycinamide: step 1/2. Its function is as follows. Part of the phosphoribosylformylglycinamidine synthase complex involved in the purines biosynthetic pathway. Catalyzes the ATP-dependent conversion of formylglycinamide ribonucleotide (FGAR) and glutamine to yield formylglycinamidine ribonucleotide (FGAM) and glutamate. The FGAM synthase complex is composed of three subunits. PurQ produces an ammonia molecule by converting glutamine to glutamate. PurL transfers the ammonia molecule to FGAR to form FGAM in an ATP-dependent manner. PurS interacts with PurQ and PurL and is thought to assist in the transfer of the ammonia molecule from PurQ to PurL. This chain is Phosphoribosylformylglycinamidine synthase subunit PurL, found in Pyrococcus furiosus (strain ATCC 43587 / DSM 3638 / JCM 8422 / Vc1).